A 292-amino-acid chain; its full sequence is Elongation factor Ts (292 aa).

The tract at residues 82-85 (TDFV) is involved in Mg(2+) ion dislocation from EF-Tu.

The protein belongs to the EF-Ts family.

It is found in the cytoplasm. In terms of biological role, associates with the EF-Tu.GDP complex and induces the exchange of GDP to GTP. It remains bound to the aminoacyl-tRNA.EF-Tu.GTP complex up to the GTP hydrolysis stage on the ribosome. The sequence is that of Elongation factor Ts from Bordetella parapertussis (strain 12822 / ATCC BAA-587 / NCTC 13253).